Here is a 159-residue protein sequence, read N- to C-terminus: 2-C-methyl-D-erythritol 2,4-cyclodiphosphate synthase (159 aa).

A divalent metal cation contacts are provided by Asp-10 and His-12. Residues 10 to 12 (DVH) and 37 to 38 (HS) contribute to the 4-CDP-2-C-methyl-D-erythritol 2-phosphate site. His-45 provides a ligand contact to a divalent metal cation. 4-CDP-2-C-methyl-D-erythritol 2-phosphate-binding positions include 59-61 (DIG), 64-68 (FPDTD), 103-109 (AQAPKML), 135-138 (TTTE), Phe-142, and Arg-145.

It belongs to the IspF family. Homotrimer. It depends on a divalent metal cation as a cofactor.

It carries out the reaction 4-CDP-2-C-methyl-D-erythritol 2-phosphate = 2-C-methyl-D-erythritol 2,4-cyclic diphosphate + CMP. Its pathway is isoprenoid biosynthesis; isopentenyl diphosphate biosynthesis via DXP pathway; isopentenyl diphosphate from 1-deoxy-D-xylulose 5-phosphate: step 4/6. Functionally, involved in the biosynthesis of isopentenyl diphosphate (IPP) and dimethylallyl diphosphate (DMAPP), two major building blocks of isoprenoid compounds. Catalyzes the conversion of 4-diphosphocytidyl-2-C-methyl-D-erythritol 2-phosphate (CDP-ME2P) to 2-C-methyl-D-erythritol 2,4-cyclodiphosphate (ME-CPP) with a corresponding release of cytidine 5-monophosphate (CMP). The protein is 2-C-methyl-D-erythritol 2,4-cyclodiphosphate synthase of Francisella tularensis subsp. novicida (strain U112).